We begin with the raw amino-acid sequence, 190 residues long: Elongation factor P (190 aa).

It belongs to the elongation factor P family.

The protein resides in the cytoplasm. The protein operates within protein biosynthesis; polypeptide chain elongation. Its function is as follows. Involved in peptide bond synthesis. Stimulates efficient translation and peptide-bond synthesis on native or reconstituted 70S ribosomes in vitro. Probably functions indirectly by altering the affinity of the ribosome for aminoacyl-tRNA, thus increasing their reactivity as acceptors for peptidyl transferase. The sequence is that of Elongation factor P from Bartonella bacilliformis (strain ATCC 35685 / KC583 / Herrer 020/F12,63).